A 312-amino-acid polypeptide reads, in one-letter code: DNA-directed RNA polymerase subunit alpha (312 aa).

The alpha N-terminal domain (alpha-NTD) stretch occupies residues 1-226 (MIEFEKPNIT…EHFKVFESAD (226 aa)). An alpha C-terminal domain (alpha-CTD) region spans residues 243-312 (KEKKLEMTIE…DLGLSLRQED (70 aa)).

The protein belongs to the RNA polymerase alpha chain family. Homodimer. The RNAP catalytic core consists of 2 alpha, 1 beta, 1 beta' and 1 omega subunit. When a sigma factor is associated with the core the holoenzyme is formed, which can initiate transcription.

The catalysed reaction is RNA(n) + a ribonucleoside 5'-triphosphate = RNA(n+1) + diphosphate. DNA-dependent RNA polymerase catalyzes the transcription of DNA into RNA using the four ribonucleoside triphosphates as substrates. This chain is DNA-directed RNA polymerase subunit alpha, found in Lactobacillus acidophilus (strain ATCC 700396 / NCK56 / N2 / NCFM).